Here is a 213-residue protein sequence, read N- to C-terminus: Uracil phosphoribosyltransferase (213 aa).

5-phospho-alpha-D-ribose 1-diphosphate contacts are provided by residues arginine 78, arginine 103, and aspartate 131–threonine 139. Uracil is bound by residues isoleucine 197 and glycine 202–alanine 204. Aspartate 203 is a 5-phospho-alpha-D-ribose 1-diphosphate binding site.

Belongs to the UPRTase family. Requires Mg(2+) as cofactor.

It catalyses the reaction UMP + diphosphate = 5-phospho-alpha-D-ribose 1-diphosphate + uracil. Its pathway is pyrimidine metabolism; UMP biosynthesis via salvage pathway; UMP from uracil: step 1/1. With respect to regulation, allosterically activated by GTP. Functionally, catalyzes the conversion of uracil and 5-phospho-alpha-D-ribose 1-diphosphate (PRPP) to UMP and diphosphate. The sequence is that of Uracil phosphoribosyltransferase from Bifidobacterium longum subsp. infantis (strain ATCC 15697 / DSM 20088 / JCM 1222 / NCTC 11817 / S12).